Here is a 261-residue protein sequence, read N- to C-terminus: Undecaprenyl-diphosphatase (261 aa).

7 helical membrane-spanning segments follow: residues 38–58 (RSDF…TFVF), 75–95 (RDYV…GLAV), 106–126 (IQPI…AESV), 136–156 (VTWS…VFPG), 181–201 (FSFL…CFEL), 217–237 (VAFV…LGYI), and 241–261 (SFAP…TWLT).

This sequence belongs to the UppP family.

The protein localises to the cell inner membrane. It catalyses the reaction di-trans,octa-cis-undecaprenyl diphosphate + H2O = di-trans,octa-cis-undecaprenyl phosphate + phosphate + H(+). Catalyzes the dephosphorylation of undecaprenyl diphosphate (UPP). Confers resistance to bacitracin. The chain is Undecaprenyl-diphosphatase from Xylella fastidiosa (strain 9a5c).